A 489-amino-acid chain; its full sequence is Glycogen synthase (489 aa).

Lysine 15 is a binding site for ADP-alpha-D-glucose.

This sequence belongs to the glycosyltransferase 1 family. Bacterial/plant glycogen synthase subfamily.

It carries out the reaction [(1-&gt;4)-alpha-D-glucosyl](n) + ADP-alpha-D-glucose = [(1-&gt;4)-alpha-D-glucosyl](n+1) + ADP + H(+). The protein operates within glycan biosynthesis; glycogen biosynthesis. Synthesizes alpha-1,4-glucan chains using ADP-glucose. In Francisella tularensis subsp. tularensis (strain SCHU S4 / Schu 4), this protein is Glycogen synthase.